The sequence spans 359 residues: CMP-N-acetylneuraminate-poly-alpha-2,8-sialyltransferase (359 aa).

Over M1–R7 the chain is Cytoplasmic. Residues W8–Y20 form a helical; Signal-anchor for type II membrane protein membrane-spanning segment. Residues K21–Q359 are Lumenal-facing. N-linked (GlcNAc...) asparagine glycosylation is found at N50, N74, and N119. 2 cysteine pairs are disulfide-bonded: C142/C292 and C156/C356. Residues N147 and N170 each contribute to the CMP-N-acetyl-beta-neuraminate site. 2 N-linked (GlcNAc...) asparagine glycosylation sites follow: N204 and N219. Residues S279, T280, G281, and W301 each contribute to the CMP-N-acetyl-beta-neuraminate site. The Proton donor/acceptor role is filled by H331.

Belongs to the glycosyltransferase 29 family. In terms of processing, autopolysialylated.

It localises to the golgi apparatus membrane. The protein localises to the secreted. The catalysed reaction is [N-acetyl-alpha-D-neuraminosyl-(2-&gt;8)](n) + CMP-N-acetyl-beta-neuraminate = [N-acetyl-alpha-D-neuraminosyl-(2-&gt;8)](n+1) + CMP + H(+). In terms of biological role, catalyzes the transfer of a sialic acid from a CMP-linked sialic acid donor onto a terminal alpha-2,3-, alpha-2,6-, or alpha-2,8-linked sialic acid of an N-linked glycan protein acceptor through alpha-2,8-linkages. Therefore, participates in polysialic acid synthesis on various sialylated N-acetyllactosaminyl oligosaccharides, including NCAM1 N-glycans, FETUB N-glycans and AHSG. It is noteworthy that alpha-2,3-linked sialic acid is apparently a better acceptor than alpha-2,6-linked sialic acid. This chain is CMP-N-acetylneuraminate-poly-alpha-2,8-sialyltransferase (ST8SIA4), found in Pan troglodytes (Chimpanzee).